A 5202-amino-acid chain; its full sequence is MNCPVLSLGSGFLFQVIEMLIFAYFASISLTESRGLFPRLENVGAFKKVSIVPTQAVCGLPDRSTFCHSSAAAESIQFCTQRFCIQDCPYRSSHPTYTALFSAGLSSCITPDKNDLHPNAHSNSASFIFGNHKSCFSSPPSPKLMASFTLAVWLKPEQQGVMCVIEKTVDGQIVFKLTISEKETMFYYRTVNGLQPPIKVMTLGRILVKKWIHLSVQVHQTKISFFINGVEKDHTPFNARTLSGSITDFASGTVQIGQSLNGLEQFVGRMQDFRLYQVALTNREILEVFSGDLLRLHAQSHCRCPGSHPRVHPLAQRYCIPNDAGDTADNRVSRLNPEAHPLSFVNDNDVGTSWVSNVFTNITQLNQGVTISVDLENGQYQVFYIIIQFFSPQPTEIRIQRKKENSLDWEDWQYFARNCGAFGMKNNGDLEKPDSVNCLQLSNFTPYSRGNVTFSILTPGPNYRPGYNNFYNTPSLQEFVKATQIRFHFHGQYYTTETAVNLRHRYYAVDEITISGRCQCHGHADNCDTTSQPYRCLCSQESFTEGLHCDRCLPLYNDKPFRQGDQVYAFNCKPCQCNSHSKSCHYNISVDPFPFEHFRGGGGVCDDCEHNTTGRNCELCKDYFFRQVGADPSAIDVCKPCDCDTVGTRNGSILCDQIGGQCNCKRHVSGRQCNQCQNGFYNLQELDPDGCSPCNCNTSGTVDGDITCHQNSGQCKCKANVIGLRCDHCNFGFKFLRSFNDVGCEPCQCNLHGSVNKFCNPHSGQCECKKEAKGLQCDTCRENFYGLDVTNCKACDCDTAGSLPGTVCNAKTGQCICKPNVEGRQCNKCLEGNFYLRQNNSFLCLPCNCDKTGTINGSLLCNKSTGQCPCKLGVTGLRCNQCEPHRYNLTIDNFQHCQMCECDSLGTLPGTICDPISGQCLCVPNRQGRRCNQCQPGFYISPGNATGCLPCSCHTTGAVNHICNSLTGQCVCQDASIAGQRCDQCKDHYFGFDPQTGRCQPCNCHLSGALNETCHLVTGQCFCKQFVTGSKCDACVPSASHLDVNNLLGCSKTPFQQPPPRGQVQSSSAINLSWSPPDSPNAHWLTYSLLRDGFEIYTTEDQYPYSIQYFLDTDLLPYTKYSYYIETTNVHGSTRSVAVTYKTKPGVPEGNLTLSYIIPIGSDSVTLTWTTLSNQSGPIEKYILSCAPLAGGQPCVSYEGHETSATIWNLVPFAKYDFSVQACTSGGCLHSLPITVTTAQAPPQRLSPPKMQKISSTELHVEWSPPAELNGIIIRYELYMRRLRSTKETTSEESRVFQSSGWLSPHSFVESANENALKPPQTMTTITGLEPYTKYEFRVLAVNMAGSVSSAWVSERTGESAPVFMIPPSVFPLSSYSLNISWEKPADNVTRGKVVGYDINMLSEQSPQQSIPMAFSQLLHTAKSQELSYTVEGLKPYRIYEFTITLCNSVGCVTSASGAGQTLAAAPAQLRPPLVKGINSTTIHLRWFPPEELNGPSPIYQLERRESSLPALMTTMMKGIRFIGNGYCKFPSSTHPVNTDFTGIKASFRTKVPEGLIVFAASPGNQEEYFALQLKKGRLYFLFDPQGSPVEVTTTNDHGKQYSDGKWHEIIAIRHQAFGQITLDGIYTGSSAILNGSTVIGDNTGVFLGGLPRSYTILRKDPEIIQKGFVGCLKDVHFMKNYNPSAIWEPLDWQSSEEQINVYNSWEGCPASLNEGAQFLGAGFLELHPYMFHGGMNFEISFKFRTDQLNGLLLFVYNKDGPDFLAMELKSGILTFRLNTSLAFTQVDLLLGLSYCNGKWNKVIIKKEGSFISASVNGLMKHASESGDQPLVVNSPVYVGGIPQELLNSYQHLCLEQGFGGCMKDVKFTRGAVVNLASVSSGAVRVNLDGCLSTDSAVNCRGNDSILVYQGKEQSVYEGGLQPFTEYLYRVIASHEGGSVYSDWSRGRTTGAAPQSVPTPSRVRSLNGYSIEVTWDEPVVRGVIEKYILKAYSEDSTRPPRMPSASAEFVNTSNLTGILTGLLPFKNYAVTLTACTLAGCTESSHALNISTPQEAPQEVQPPVAKSLPSSLLLSWNPPKKANGIITQYCLYMDGRLIYSGSEENYIVTDLAVFTPHQFLLSACTHVGCTNSSWVLLYTAQLPPEHVDSPVLTVLDSRTIHIQWKQPRKISGILERYVLYMSNHTHDFTIWSVIYNSTELFQDHMLQYVLPGNKYLIKLGACTGGGCTVSEASEALTDEDIPEGVPAPKAHSYSPDSFNVSWTEPEYPNGVITSYGLYLDGILIHNSSELSYRAYGFAPWSLHSFRVQACTAKGCALGPLVENRTLEAPPEGTVNVFVKTQGSRKAHVRWEAPFRPNGLLTHSVLFTGIFYVDPVGNNYTLLNVTKVMYSGEETNLWVLIDGLVPFTNYTVQVNISNSQGSLITDPITIAMPPGAPDGVLPPRLSSATPTSLQVVWSTPARNNAPGSPRYQLQMRSGDSTHGFLELFSNPSASLSYEVSDLQPYTEYMFRLVASNGFGSAHSSWIPFMTAEDKPGPVVPPILLDVKSRMMLVTWQHPRKSNGVITHYNIYLHGRLYLRTPGNVTNCTVMHLHPYTAYKFQVEACTSKGCSLSPESQTVWTLPGAPEGIPSPELFSDTPTSVIISWQPPTHPNGLVENFTIERRVKGKEEVTTLVTLPRSHSMRFIDKTSALSPWTKYEYRVLMSTLHGGTNSSAWVEVTTRPSRPAGVQPPVVTVLEPDAVQVTWKPPLIQNGDILSYEIHMPDPHITLTNVTSAVLSQKVTHLIPFTNYSVTIVACSGGNGYLGGCTESLPTYVTTHPTVPQNVGPLSVIPLSESYVVISWQPPSKPNGPNLRYELLRRKIQQPLASNPPEDLNRWHNIYSGTQWLYEDKGLSRFTTYEYMLFVHNSVGFTPSREVTVTTLAGLPERGANLTASVLNHTAIDVRWAKPTVQDLQGEVEYYTLFWSSATSNDSLKILPDVNSHVIGHLKPNTEYWIFISVFNGVHSINSAGLHATTCDGEPQGMLPPEVVIINSTAVRVIWTSPSNPNGVVTEYSIYVNNKLYKTGMNVPGSFILRDLSPFTIYDIQVEVCTIYACVKSNGTQITTVEDTPSDIPTPTIRGITSRSLQIDWVSPRKPNGIILGYDLLWKTWYPCAKTQKLVQDQSDELCKAVRCQKPESICGHICYSSEAKVCCNGVLYNPKPGHRCCEEKYIPFVLNSTGVCCGGRIQEAQPNHQCCSGYYARILPGEVCCPDEQHNRVSVGIGDSCCGRMPYSTSGNQICCAGRLHDGHGQKCCGRQIVSNDLECCGGEEGVVYNRLPGMFCCGQDYVNMSDTICCSASSGESKAHIKKNDPVPVKCCETELIPKSQKCCNGVGYNPLKYVCSDKISTGMMMKETKECRILCPASMEATEHCGRCDFNFTSHICTVIRGSHNSTGKASIEEMCSSAEETIHTGSVNTYSYTDVNLKPYMTYEYRISAWNSYGRGLSKAVRARTKEDVPQGVSPPTWTKIDNLEDTIVLNWRKPIQSNGPIIYYILLRNGIERFRGTSLSFSDKEGIQPFQEYSYQLKACTVAGCATSSKVVAATTQGVPESILPPSITALSAVALHLSWSVPEKSNGVIKEYQIRQVGKGLIHTDTTDRRQHTVTGLQPYTNYSFTLTACTSAGCTSSEPFLGQTLQAAPEGVWVTPRHIIINSTTVELYWSLPEKPNGLVSQYQLSRNGNLLFLGGSEEQNFTDKNLEPNSRYTYKLEVKTGGGSSASDDYIVQTPMSTPEEIYPPYNITVIGPYSIFVAWIPPGILIPEIPVEYNVLLNDGSVTPLAFSVGHHQSTLLENLTPFTQYEIRIQACQNGSCGVSSRMFVKTPEAAPMDLNSPVLKALGSACIEIKWMPPEKPNGIIINYFIYRRPAGIEEESVLFVWSEGALEFMDEGDTLRPFTLYEYRVRACNSKGSVESLWSLTQTLEAPPQDFPAPWAQATSAHSVLLNWTKPESPNGIISHYRVVYQERPDDPTFNSPTVHAFTVKGTSHQAHLYGLEPFTTYRIGVVAANHAGEILSPWTLIQTLESSPSGLRNFIVEQKENGRALLLQWSEPMRTNGVIKTYNIFSDGFLEYSGLNRQFLFRRLDPFTLYTLTLEACTRAGCAHSAPQPLWTDEAPPDSQLAPTVHSVKSTSVELSWSEPVNPNGKIIRYEVIRRCFEGKAWGNQTIQADEKIVFTEYNTERNTFMYNDTGLQPWTQCEYKIYTWNSAGHTCSSWNVVRTLQAPPEGLSPPVISYVSMNPQKLLISWIPPEQSNGIIQSYRLQRNEMLYPFSFDPVTFNYTDEELLPFSTYSYALQACTSGGCSTSKPTSITTLEAAPSEVSPPDLWAVSATQMNVCWSPPTVQNGKITKYLVRYDNKESLAGQGLCLLVSHLQPYSQYNFSLVACTNGGCTASVSKSAWTMEALPENMDSPTLQVTGSESIEITWKPPRNPNGQIRSYELRRDGTIVYTGLETRYRDFTLTPGVEYSYTVTASNSQGGILSPLVKDRTSPSAPSGMEPPKLQARGPQEILVNWDPPVRTNGDIINYTLFIRELFERETKIIHINTTHNSFGMQSYIVNQLKPFHRYEIRIQACTTLGCASSDWTFIQTPEIAPLMQPPPHLEVQMAPGGFQPTVSLLWTGPLQPNGKVLYYELYRRQIATQPRKSNPVLIYNGSSTSFIDSELLPFTEYEYQVWAVNSAGKAPSSWTWCRTGPAPPEGLRAPTFHVISSTQAVVNISAPGKPNGIVSLYRLFSSSAHGAETVLSEGMATQQTLHGLQAFTNYSIGVEACTCFNCCSKGPTAELRTHPAPPSGLSSPQIGTLASRTASFRWSPPMFPNGVIHSYELQFHVACPPDSALPCTPSQIETKYTGLGQKASLGGLQPYTTYKLRVVAHNEVGSTASEWISFTTQKELPQYRAPFSVDSNLSVVCVNWSDTFLLNGQLKEYVLTDGGRRVYSGLDTTLYIPRTADKTFFFQVICTTDEGSVKTPLIQYDTSTGLGLVLTTPGKKKGSRSKSTEFYSELWFIVLMAMLGLILLAIFLSLILQRKIHKEPYIRERPPLVPLQKRMSPLNVYPPGENHMGLADTKIPRSGTPVSIRSNRSACVLRIPSQNQTSLTYSQGSLHRSVSQLMDIQDKKVLMDNSLWEAIMGHNSGLYVDEEDLMNAIKDFSSVTKERTTFTDTHL.

The signal sequence occupies residues 1–31 (MNCPVLSLGSGFLFQVIEMLIFAYFASISLT). Over 32-5042 (ESRGLFPRLE…KSTEFYSELW (5011 aa)) the chain is Extracellular. The Laminin N-terminal domain occupies 271-517 (QDFRLYQVAL…AVDEITISGR (247 aa)). N-linked (GlcNAc...) asparagine glycosylation is found at Asn361 and Asn451. 40 disulfides stabilise this stretch: Cys518-Cys527, Cys520-Cys536, Cys538-Cys549, Cys552-Cys572, Cys575-Cys584, Cys577-Cys605, Cys608-Cys617, Cys620-Cys638, Cys641-Cys655, Cys643-Cys662, Cys664-Cys673, Cys676-Cys691, Cys694-Cys708, Cys696-Cys715, Cys717-Cys726, Cys729-Cys744, Cys747-Cys759, Cys749-Cys766, Cys768-Cys777, Cys780-Cys792, Cys795-Cys808, Cys797-Cys815, Cys817-Cys826, Cys829-Cys844, Cys847-Cys861, Cys849-Cys868, Cys870-Cys879, Cys882-Cys897, Cys900-Cys913, Cys902-Cys920, Cys922-Cys931, Cys934-Cys948, Cys951-Cys963, Cys953-Cys970, Cys972-Cys982, Cys985-Cys999, Cys1002-Cys1014, Cys1004-Cys1021, Cys1023-Cys1032, and Cys1035-Cys1050. Laminin EGF-like domains follow at residues 518 to 574 (CQCH…NCKP), 575 to 640 (CQCN…VCKP), 641 to 693 (CDCD…GCSP), 694 to 746 (CNCN…GCEP), 747 to 794 (CQCN…NCKA), 795 to 846 (CDCD…LCLP), 847 to 899 (CNCD…HCQM), 900 to 950 (CECD…GCLP), 951 to 1001 (CSCH…RCQP), and 1002 to 1052 (CNCH…GCSK). N-linked (GlcNAc...) asparagine glycans are attached at residues Asn587 and Asn611. Asn650 is a glycosylation site (N-linked (GlcNAc...) asparagine). N-linked (GlcNAc...) asparagine glycosylation occurs at Asn697. 3 N-linked (GlcNAc...) asparagine glycosylation sites follow: Asn839, Asn856, and Asn862. Residue Asn888 is glycosylated (N-linked (GlcNAc...) asparagine). Asn944 carries an N-linked (GlcNAc...) asparagine glycan. The N-linked (GlcNAc...) asparagine glycan is linked to Asn1011. Fibronectin type-III domains follow at residues 1058 to 1146 (PPPR…TKPG), 1148 to 1244 (PEGN…APPQ), 1245 to 1363 (RLSP…SAPV), and 1364 to 1468 (FMIP…AAPA). Asn1071, Asn1151, and Asn1174 each carry an N-linked (GlcNAc...) asparagine glycan. N-linked (GlcNAc...) asparagine glycosylation is found at Asn1379, Asn1388, Asn1479, and Asn1635. 2 Laminin G-like domains span residues 1517–1709 (MKGI…WEGC) and 1714–1891 (NEGA…LDGC). Cys1672 and Cys1709 are oxidised to a cystine. A glycan (N-linked (GlcNAc...) asparagine) is linked at Asn1779. Cys1862 and Cys1891 are disulfide-bonded. 14 Fibronectin type-III domains span residues 1869-1955 (TRGA…AAPQ), 1957-2054 (VPTP…TPQE), 2055-2144 (APQE…LPPE), 2145-2239 (HVDS…TDED), 2243-2330 (GVPA…APPE), 2331-2433 (GTVN…MPPG), 2437-2531 (GVLP…TAED), 2535-2622 (PVVP…TLPG), 2624-2722 (PEGI…TRPS), 2726-2819 (GVQP…THPT), 2820-2923 (VPQN…TLAG), 2927-3018 (RGAN…TCDG), 3022-3112 (GMLP…TPSD), and 3113-3209 (IPTP…CCEE). 14 N-linked (GlcNAc...) asparagine glycosylation sites follow: Asn1903, Asn2011, Asn2014, Asn2048, Asn2130, Asn2182, Asn2195, Asn2258, Asn2285, Asn2322, Asn2377, Asn2382, Asn2407, and Asn2413. N-linked (GlcNAc...) asparagine glycans are attached at residues Asn2581, Asn2584, Asn2656, Asn2710, Asn2770, and Asn2788. 5 N-linked (GlcNAc...) asparagine glycosylation sites follow: Asn2930, Asn2937, Asn2970, Asn3032, and Asn3099. N-linked (GlcNAc...) asparagine glycans are attached at residues Asn3217, Asn3330, Asn3419, and Asn3433. Intrachain disulfides connect Cys3371/Cys3444 and Cys3399/Cys3425. Fibronectin type-III domains follow at residues 3403-3497 (CPAS…TKED), 3501-3589 (GVSP…TQGV), 3592-3682 (SILP…AAPE), 3684-3770 (VWVT…TPMS), 3774-3865 (EIYP…TPEA), 3866-3963 (APMD…TLEA), 3964-4067 (PPQD…SSPS), 4068-4153 (GLRN…TDEA), 4157-4261 (SQLA…TLQA), 4262-4357 (PPEG…AAPS), 4358-4445 (EVSP…ALPE), 4446-4530 (NMDS…TSPS), 4534-4630 (GMEP…TPEI), 4636-4733 (PPPH…TGPA), 4734-4827 (PPEG…THPA), and 4828-4927 (PPSG…SFTT). N-linked (GlcNAc...) asparagine glycans are attached at residues Asn3653, Asn3694, Asn3733, Asn3780, and Asn3849. An N-linked (GlcNAc...) asparagine glycan is attached at Asn3984. N-linked (GlcNAc...) asparagine glycans are attached at residues Asn4202, Asn4226, Asn4317, and Asn4418. Residues 4518-4541 (ILSPLVKDRTSPSAPSGMEPPKLQ) are disordered. Residues Asn4564, Asn4583, Asn4691, Asn4754, and Asn4800 are each glycosylated (N-linked (GlcNAc...) asparagine). N-linked (GlcNAc...) asparagine glycans are attached at residues Asn4943 and Asn4950. The chain crosses the membrane as a helical span at residues 5043-5063 (FIVLMAMLGLILLAIFLSLIL). The Cytoplasmic portion of the chain corresponds to 5064–5202 (QRKIHKEPYI…ERTTFTDTHL (139 aa)). A PDZ-binding motif is present at residues 5200 to 5202 (THL).

As to quaternary structure, interacts with collagen IV and fibronectin via its laminin EGF-like domains. Interaction with collagen may be required for stable integration into the basement membrane. Interacts with NINL. Interacts with USH1C. Component of USH2 complex, composed of ADGRV1, PDZD7, USH2A and WHRN. Interacts with ADGRV1/MASS1 (via N-terminal PDZ domain). Interacts (via the cytoplasmic region) with WHRN. Interacts (via the cytoplasmic region) with PDZD7. Interacts (via the cytoplasmic region) with VEZT and MYO7A (via MyTH4-FERM domains); the interaction associates VEZT with the USH2 complex at the stereocilia base. Present in the basement membrane of many, but not all tissues. Expressed in retina, cochlea, small and large intestine, pancreas, bladder, prostate, esophagus, trachea, thymus, salivary glands, placenta, ovary, fallopian tube, uterus and testis. Absent in many other tissues such as heart, lung, liver, kidney and brain. In the retina, it is present in the basement membranes in the Bruch's layer choroid capillary basement membranes, where it localizes just beneath the retinal pigment epithelial cells (at protein level). Weakly expressed. Isoform 2 is expressed in fetal eye, cochlea and heart, and at very low level in brain, CNS, intestine, skeleton, tongue, kidney and lung. Isoform 2 is not expressed in stomach and liver. In adult tissues, isoform 2 is expressed in neural retina and testis, and at low level in brain, heart, kidney and liver. Isoform 1 displays a similar pattern of expression but is expressed at very low level in fetal cochlea.

The protein resides in the cell projection. It is found in the stereocilium membrane. The protein localises to the secreted. In terms of biological role, involved in hearing and vision as member of the USH2 complex. In the inner ear, required for the maintenance of the hair bundle ankle formation, which connects growing stereocilia in developing cochlear hair cells. In retina photoreceptors, the USH2 complex is required for the maintenance of periciliary membrane complex that seems to play a role in regulating intracellular protein transport. The protein is Usherin (USH2A) of Homo sapiens (Human).